Here is a 394-residue protein sequence, read N- to C-terminus: T-cell acute lymphocytic leukemia protein 1 (394 aa).

Residues 1-17 (MSLKMMERLSTDMDGTR) are compositionally biased toward basic and acidic residues. Residues 1–49 (MSLKMMERLSTDMDGTRDVASPPARQDAAEPERTVELSGVKEGAAPNSP) form a disordered region. 7 consecutive repeat copies span residues 83–89 (TELCRAT), 94–100 (TELCRAP), 105–111 (TELCRAP), 116–122 (TELCRAP), 127–133 (TELCRPP), 149–155 (SELCRAP), and 167–173 (TELCRPP). Positions 83-173 (TELCRATLTP…TATTELCRPP (91 aa)) are 7 X 7 AA approximate repeats of [TS]-E-L-C-R-[AP]-P. The region spanning 262–314 (VRRIFTNSRERWRQQNVNGAFAELRKLIPTHPPDKKLSKNEILRLAMKYINFL) is the bHLH domain. A disordered region spans residues 347–394 (LSPNSSCGSSLDGAPSPDSYSEEHDALDSKHSRNLHQAMLPIDGSGQR). The span at 367 to 377 (SEEHDALDSKH) shows a compositional bias: basic and acidic residues.

First expressed in patches on the ventral side of the embryo in a region that will give rise to hematopoietic tissue. By late neurula stages, expressed throughout the ventral blood island region. By tailbud stages, expression extends to probable vascular progenitor cells, but is excluded from the presumptive liver anlage. Also expressed in the central nervous system at the tailbud stage.

The protein resides in the nucleus. Its function is as follows. Transcription factor that acts synergistically with lmo2 and gata1 to specify embryonic dorsal mesoderm to a hematopoietic fate. The chain is T-cell acute lymphocytic leukemia protein 1 from Xenopus laevis (African clawed frog).